The chain runs to 304 residues: UDP-3-O-acyl-N-acetylglucosamine deacetylase (304 aa).

Positions 77, 233, and 237 each coordinate Zn(2+). Catalysis depends on His-260, which acts as the Proton donor.

The protein belongs to the LpxC family. The cofactor is Zn(2+).

The enzyme catalyses a UDP-3-O-[(3R)-3-hydroxyacyl]-N-acetyl-alpha-D-glucosamine + H2O = a UDP-3-O-[(3R)-3-hydroxyacyl]-alpha-D-glucosamine + acetate. It participates in glycolipid biosynthesis; lipid IV(A) biosynthesis; lipid IV(A) from (3R)-3-hydroxytetradecanoyl-[acyl-carrier-protein] and UDP-N-acetyl-alpha-D-glucosamine: step 2/6. Its function is as follows. Catalyzes the hydrolysis of UDP-3-O-myristoyl-N-acetylglucosamine to form UDP-3-O-myristoylglucosamine and acetate, the committed step in lipid A biosynthesis. The sequence is that of UDP-3-O-acyl-N-acetylglucosamine deacetylase from Lawsonia intracellularis (strain PHE/MN1-00).